Consider the following 379-residue polypeptide: Transcription factor bHLH122 (379 aa).

The span at 1–17 (MESEFQQHHFLLHDHQH) shows a compositional bias: basic and acidic residues. The segment at 1 to 21 (MESEFQQHHFLLHDHQHQRPR) is disordered. At S74 the chain carries Phosphoserine. Disordered regions lie at residues 79–98 (TFNS…EDED), 133–156 (SVSR…ARHN), and 190–286 (TSNT…MSLP). Basic and acidic residues predominate over residues 84 to 93 (GTEKKPPEVK). Over residues 190–200 (TSNTEASSLTP) the composition is skewed to polar residues. S213 and S234 each carry phosphoserine. A compositionally biased stretch (polar residues) spans 235-261 (GGFNRSFGNEGSASSKLTALARTQSGG). Over residues 265-274 (YKTKDEDSAS) the composition is skewed to basic and acidic residues. One can recognise a bHLH domain in the interval 310-360 (CATHPRSIAERVRRTKISERMRKLQDLVPNMDTQTNTADMLDLAVQYIKDL).

Homodimer.

The protein localises to the nucleus. The polypeptide is Transcription factor bHLH122 (BHLH122) (Arabidopsis thaliana (Mouse-ear cress)).